Reading from the N-terminus, the 138-residue chain is Superoxide dismutase [Mn] (138 aa).

S1, H49, D133, and H137 together coordinate Mn(2+).

Belongs to the iron/manganese superoxide dismutase family. Requires Mn(2+) as cofactor.

It carries out the reaction 2 superoxide + 2 H(+) = H2O2 + O2. Functionally, destroys superoxide anion radicals which are normally produced within the cells and which are toxic to biological systems. The sequence is that of Superoxide dismutase [Mn] (sodA) from Mycobacterium marinum.